The sequence spans 102 residues: Small ribosomal subunit protein uS10 (102 aa).

Belongs to the universal ribosomal protein uS10 family. As to quaternary structure, part of the 30S ribosomal subunit.

Involved in the binding of tRNA to the ribosomes. This is Small ribosomal subunit protein uS10 from Clostridium novyi (strain NT).